The primary structure comprises 105 residues: Large ribosomal subunit protein uL24 (105 aa).

The protein belongs to the universal ribosomal protein uL24 family. In terms of assembly, part of the 50S ribosomal subunit.

Its function is as follows. One of two assembly initiator proteins, it binds directly to the 5'-end of the 23S rRNA, where it nucleates assembly of the 50S subunit. One of the proteins that surrounds the polypeptide exit tunnel on the outside of the subunit. In Clostridium kluyveri (strain ATCC 8527 / DSM 555 / NBRC 12016 / NCIMB 10680 / K1), this protein is Large ribosomal subunit protein uL24.